Reading from the N-terminus, the 370-residue chain is Selenide, water dikinase 2 (370 aa).

The active site involves Sec24. Sec24 is a non-standard amino acid (selenocysteine). Residues Lys27, 55 to 57 (GMD), Asp76, and Asp99 contribute to the ATP site. A Mg(2+)-binding site is contributed by Asp57. Mg(2+) is bound by residues Asp99 and Asp258.

Belongs to the selenophosphate synthase 1 family. Class I subfamily. In terms of assembly, homodimer. It depends on Mg(2+) as a cofactor. First expressed in the midgut anlagen with subsequent expression in a variety of tissues including the gut and nervous system.

The enzyme catalyses hydrogenselenide + ATP + H2O = selenophosphate + AMP + phosphate + 2 H(+). Functionally, synthesizes selenophosphate from selenide and ATP. The polypeptide is Selenide, water dikinase 2 (Sps2) (Drosophila melanogaster (Fruit fly)).